Here is a 256-residue protein sequence, read N- to C-terminus: Imidazole glycerol phosphate synthase subunit HisF (256 aa).

Catalysis depends on residues Asp-11 and Asp-130.

This sequence belongs to the HisA/HisF family. In terms of assembly, heterodimer of HisH and HisF.

It is found in the cytoplasm. It carries out the reaction 5-[(5-phospho-1-deoxy-D-ribulos-1-ylimino)methylamino]-1-(5-phospho-beta-D-ribosyl)imidazole-4-carboxamide + L-glutamine = D-erythro-1-(imidazol-4-yl)glycerol 3-phosphate + 5-amino-1-(5-phospho-beta-D-ribosyl)imidazole-4-carboxamide + L-glutamate + H(+). The protein operates within amino-acid biosynthesis; L-histidine biosynthesis; L-histidine from 5-phospho-alpha-D-ribose 1-diphosphate: step 5/9. Functionally, IGPS catalyzes the conversion of PRFAR and glutamine to IGP, AICAR and glutamate. The HisF subunit catalyzes the cyclization activity that produces IGP and AICAR from PRFAR using the ammonia provided by the HisH subunit. The sequence is that of Imidazole glycerol phosphate synthase subunit HisF from Cupriavidus pinatubonensis (strain JMP 134 / LMG 1197) (Cupriavidus necator (strain JMP 134)).